A 283-amino-acid polypeptide reads, in one-letter code: NADPH-dependent 3-dehydrocapnine reductase (283 aa).

The active-site Proton acceptor is tyrosine 153.

The protein belongs to the short-chain dehydrogenases/reductases (SDR) family.

It catalyses the reaction 3-oxocapnine + NADPH + H(+) = capnine + NADP(+). It participates in lipid metabolism. Functionally, reductase involved in the biosynthesis of capnine, a sulfonolipid present in the outer membrane of gliding Bacteroidetes and essential for gliding motility. Catalyzes the reduction of 3-dehydrocapnine to capnine. This Ornithobacterium rhinotracheale protein is NADPH-dependent 3-dehydrocapnine reductase.